The chain runs to 341 residues: Pectate trisaccharide-lyase (341 aa).

The N-terminal stretch at 1 to 27 is a signal peptide; it reads MKKLISIIFIFVLGVVGSLTAAVSAEA. Residues 28–39 constitute a propeptide that is removed on maturation; sequence ASALNSGKVNPL. 2 PbH1 repeats span residues 131–156 and 158–186; these read ANNI…GIEG and SKNI…FDVK. 3 residues coordinate Ca(2+): D150, D180, and D184. Residue R233 is part of the active site. PbH1 repeat units lie at residues 262-283 and 287-322; these read GARI…VSWY and PGYW…SLDN.

It belongs to the polysaccharide lyase 1 family. Ca(2+) is required as a cofactor.

The protein resides in the secreted. It carries out the reaction eliminative cleavage of unsaturated trigalacturonate as the major product from the reducing end of polygalacturonic acid/pectate.. Functionally, cleaves unsaturated oligo-galacturonides from pectin. The major product is trigalacturonate; digalacturonate and tetragalacturonate are also produced. Activity on methylated pectins decreases with an increasing degree of methylation. In Bacillus licheniformis (strain ATCC 14580 / DSM 13 / JCM 2505 / CCUG 7422 / NBRC 12200 / NCIMB 9375 / NCTC 10341 / NRRL NRS-1264 / Gibson 46), this protein is Pectate trisaccharide-lyase.